The chain runs to 504 residues: Maturase K (504 aa).

This sequence belongs to the intron maturase 2 family. MatK subfamily.

It localises to the plastid. The protein resides in the chloroplast. Its function is as follows. Usually encoded in the trnK tRNA gene intron. Probably assists in splicing its own and other chloroplast group II introns. The chain is Maturase K from Simmondsia chinensis (Jojoba).